The sequence spans 140 residues: Large ribosomal subunit protein uL11 (140 aa).

It belongs to the universal ribosomal protein uL11 family. In terms of assembly, part of the ribosomal stalk of the 50S ribosomal subunit. Interacts with L10 and the large rRNA to form the base of the stalk. L10 forms an elongated spine to which L12 dimers bind in a sequential fashion forming a multimeric L10(L12)X complex. Post-translationally, one or more lysine residues are methylated.

Functionally, forms part of the ribosomal stalk which helps the ribosome interact with GTP-bound translation factors. This Geobacter sp. (strain M21) protein is Large ribosomal subunit protein uL11.